A 1137-amino-acid polypeptide reads, in one-letter code: Nonsense-mediated mRNA decay factor SMG7 (1137 aa).

S2 carries the N-acetylserine modification. TPR repeat units lie at residues 152 to 185 (QHCL…VPSN) and 187 to 219 (QPYN…KFPF). S520 bears the Phosphoserine mark. Residues 620–631 (ELRKTPVSEARK) show a composition bias toward basic and acidic residues. Disordered regions lie at residues 620–646 (ELRK…NSQF), 696–794 (LQPT…YQQA), 890–911 (IDRR…VPRM), 988–1055 (PSLP…AMGG), 1069–1089 (SSWH…PSME), and 1104–1137 (SSSM…NPPH). T624 carries the post-translational modification Phosphothreonine. Polar residues-rich tracts occupy residues 633-646 (PVTQ…NSQF) and 696-722 (LQPT…SQQR). Residues 723–770 (PSGPGPMNQGPQQSQPPSQQPLTSLPAQPTAQSTSQLQVQALTQQQQS) show a composition bias toward low complexity. S781 and S897 each carry phosphoserine. A compositionally biased stretch (polar residues) spans 988–998 (PSLPASSDHST). The span at 999 to 1025 (PASQSPHSSNPSSLPSSPPTHNHNSVP) shows a compositional bias: low complexity. A compositionally biased stretch (basic and acidic residues) spans 1036 to 1050 (DNRDRRTADRWKTDK). Over residues 1069–1081 (SSWHQASTPSGTW) the composition is skewed to polar residues. Residues 1117–1131 (QLLMQQKQKQQRGQG) are compositionally biased toward low complexity.

As to quaternary structure, part of a complex that contains SMG5, SMG7, PPP2CA, a short isoform of UPF3A (isoform UPF3AS, but not isoform UPF3AL) and phosphorylated UPF1. Interacts with DHX34; the interaction is RNA-independent.

It is found in the cytoplasm. Its subcellular location is the nucleus. Its function is as follows. Plays a role in nonsense-mediated mRNA decay. Recruits UPF1 to cytoplasmic mRNA decay bodies. Together with SMG5 is thought to provide a link to the mRNA degradation machinery involving exonucleolytic pathways, and to serve as an adapter for UPF1 to protein phosphatase 2A (PP2A), thereby triggering UPF1 dephosphorylation. This chain is Nonsense-mediated mRNA decay factor SMG7, found in Homo sapiens (Human).